The primary structure comprises 202 residues: MEAYINLFIKSVFIENMALSFFLGMCTFIAVSKKIETAVGLGIAVVIVQTLTVPANNLIYTYLLKEGALSWAGLHDVDLSFIALMACIGVIAAMVQILEMVLDKFFPALYNALGIFLPLITVNCAILAGSLFMIERDYNFSESVVYGVGSGFGWALAITAMAGVREKLKYSDVPAGLRGLGITFISAGLMALGFMAFSGIQL.

6 helical membrane passes run 11–31 (SVFIENMALSFFLGMCTFIAV), 35–55 (IETAVGLGIAVVIVQTLTVPA), 81–101 (FIALMACIGVIAAMVQILEMV), 114–134 (GIFLPLITVNCAILAGSLFMI), 144–164 (VVYGVGSGFGWALAITAMAGV), and 180–200 (LGITFISAGLMALGFMAFSGI).

This sequence belongs to the NqrDE/RnfAE family. As to quaternary structure, composed of six subunits; NqrA, NqrB, NqrC, NqrD, NqrE and NqrF.

The protein resides in the cell inner membrane. It carries out the reaction a ubiquinone + n Na(+)(in) + NADH + H(+) = a ubiquinol + n Na(+)(out) + NAD(+). Functionally, NQR complex catalyzes the reduction of ubiquinone-1 to ubiquinol by two successive reactions, coupled with the transport of Na(+) ions from the cytoplasm to the periplasm. NqrA to NqrE are probably involved in the second step, the conversion of ubisemiquinone to ubiquinol. The polypeptide is Na(+)-translocating NADH-quinone reductase subunit E (Methylococcus capsulatus (strain ATCC 33009 / NCIMB 11132 / Bath)).